Reading from the N-terminus, the 309-residue chain is tRNA-cytidine(32) 2-sulfurtransferase (309 aa).

A PP-loop motif motif is present at residues 47–52 (SGGKDS). [4Fe-4S] cluster-binding residues include Cys122, Cys125, and Cys213.

Belongs to the TtcA family. As to quaternary structure, homodimer. Requires Mg(2+) as cofactor. [4Fe-4S] cluster is required as a cofactor.

Its subcellular location is the cytoplasm. The catalysed reaction is cytidine(32) in tRNA + S-sulfanyl-L-cysteinyl-[cysteine desulfurase] + AH2 + ATP = 2-thiocytidine(32) in tRNA + L-cysteinyl-[cysteine desulfurase] + A + AMP + diphosphate + H(+). The protein operates within tRNA modification. Catalyzes the ATP-dependent 2-thiolation of cytidine in position 32 of tRNA, to form 2-thiocytidine (s(2)C32). The sulfur atoms are provided by the cysteine/cysteine desulfurase (IscS) system. This is tRNA-cytidine(32) 2-sulfurtransferase from Erwinia tasmaniensis (strain DSM 17950 / CFBP 7177 / CIP 109463 / NCPPB 4357 / Et1/99).